The sequence spans 337 residues: Autophagy protein 5 (337 aa).

Lys-128 participates in a covalent cross-link: Glycyl lysine isopeptide (Lys-Gly) (interchain with G-Cter in ATG12). The segment at 271–290 (RAQTSGEERSIDDTEEADGS) is disordered. Over residues 276 to 290 (GEERSIDDTEEADGS) the composition is skewed to basic and acidic residues.

Belongs to the ATG5 family. In terms of assembly, conjugated to ATG12. Conjugated to ATG12; which is essential for autophagy. Conjugation with ATG12 involves ATG7 as an E1-like activating enzyme and ATG10 as an E2-like conjugating enzyme. In terms of tissue distribution, ubiquitous.

The protein resides in the cytoplasm. Its function is as follows. Required for autophagy. Conjugation to ATG12 is essential for plant nutrient recycling. Involved in a negative feedback loop that modulates NPR1-dependent salicylic acid (SA) signaling and limits senescence and immunity-related programmed cell death (PCD) in plants. Involved in complete proteolysis of chloroplast stroma proteins in senescent leaves. Involved in the degradation of damaged peroxisomes. This chain is Autophagy protein 5, found in Arabidopsis thaliana (Mouse-ear cress).